A 392-amino-acid polypeptide reads, in one-letter code: Protein O-glucosyltransferase 1 (392 aa).

The N-terminal stretch at 1 to 23 is a signal peptide; it reads MERLSGCRLRPWMLLLLLFPVQG. 4 disulfides stabilise this stretch: Cys-49/Cys-56, Cys-54/Cys-357, Cys-102/Cys-108, and Cys-263/Cys-286. N-linked (GlcNAc...) asparagine glycosylation occurs at Asn-53. Positions 103–107 are interaction with the consensus sequence C-X-S-X-[PA]-C in peptide substrates; it reads MFPSR. The active-site Proton donor/acceptor is Asp-133. Residues 172–178 are interaction with the consensus sequence C-X-S-X-[PA]-C in peptide substrates; it reads AVWPLYP. Tyr-177 contacts UDP-alpha-D-glucose. Residue Asn-204 is glycosylated (N-linked (GlcNAc...) asparagine). UDP-alpha-D-glucose-binding positions include Ser-212, Arg-218, and 274 to 279; that span reads VAASFR. Asn-373 is a glycosylation site (N-linked (GlcNAc...) asparagine). A Prevents secretion from ER motif is present at residues 389 to 392; that stretch reads KTEL.

This sequence belongs to the glycosyltransferase 90 family.

It is found in the endoplasmic reticulum lumen. It catalyses the reaction L-seryl-[EGF-like domain protein] + UDP-alpha-D-xylose = 3-O-(beta-D-xylosyl)-L-seryl-[EGF-like domain protein] + UDP + H(+). The enzyme catalyses L-seryl-[EGF-like domain protein] + UDP-alpha-D-glucose = 3-O-(beta-D-glucosyl)-L-seryl-[EGF-like domain protein] + UDP + H(+). It functions in the pathway protein modification; protein glycosylation. Its function is as follows. Dual specificity glycosyltransferase that catalyzes the transfer of glucose and xylose from UDP-glucose and UDP-xylose, respectively, to a serine residue found in the consensus sequence of C-X-S-X-P-C. Specifically targets extracellular EGF repeats of protein such as CRB2, F7, F9 and NOTCH2. Acts as a positive regulator of Notch signaling by mediating O-glucosylation of Notch, leading to regulate muscle development. Notch glucosylation does not affect Notch ligand binding. Required during early development to promote gastrulation: acts by mediating O-glucosylation of CRB2, which is required for CRB2 localization to the cell membrane. This Rattus norvegicus (Rat) protein is Protein O-glucosyltransferase 1 (Poglut1).